A 320-amino-acid chain; its full sequence is HPr kinase/phosphorylase (320 aa).

Active-site residues include H141 and K162. 156–163 (GHSGLGKS) provides a ligand contact to ATP. A Mg(2+)-binding site is contributed by S163. D180 serves as the catalytic Proton acceptor; for phosphorylation activity. Proton donor; for dephosphorylation activity. The important for the catalytic mechanism of both phosphorylation and dephosphorylation stretch occupies residues 204–213 (LEVRGLGILN). E205 is a binding site for Mg(2+). R248 is an active-site residue. Positions 269-274 (PVAVGR) are important for the catalytic mechanism of dephosphorylation.

The protein belongs to the HPrK/P family. As to quaternary structure, homohexamer. Mg(2+) serves as cofactor.

The catalysed reaction is [HPr protein]-L-serine + ATP = [HPr protein]-O-phospho-L-serine + ADP + H(+). It carries out the reaction [HPr protein]-O-phospho-L-serine + phosphate + H(+) = [HPr protein]-L-serine + diphosphate. Functionally, catalyzes the ATP- as well as the pyrophosphate-dependent phosphorylation of a specific serine residue in HPr, a phosphocarrier protein of the phosphoenolpyruvate-dependent sugar phosphotransferase system (PTS). HprK/P also catalyzes the pyrophosphate-producing, inorganic phosphate-dependent dephosphorylation (phosphorolysis) of seryl-phosphorylated HPr (P-Ser-HPr). The sequence is that of HPr kinase/phosphorylase from Neisseria meningitidis serogroup B (strain ATCC BAA-335 / MC58).